The primary structure comprises 592 residues: UPF0329 protein ECU01_0110/ECU01_1500/ECU08_0040 (592 aa).

Composition is skewed to basic and acidic residues over residues 306–339 and 353–362; these read RQRR…SKEK and EAKEEEKKES. Residues 306–404 are disordered; it reads RQRRREREIE…RKRYKIHRRV (99 aa).

Belongs to the UPF0329 family.

This chain is UPF0329 protein ECU01_0110/ECU01_1500/ECU08_0040, found in Encephalitozoon cuniculi (strain GB-M1) (Microsporidian parasite).